A 703-amino-acid chain; its full sequence is Elongation factor G 2 (703 aa).

One can recognise a tr-type G domain in the interval Glu8 to Ser291. GTP-binding positions include Ala17–Thr24, Asp89–His93, and Asn143–Asp146.

It belongs to the TRAFAC class translation factor GTPase superfamily. Classic translation factor GTPase family. EF-G/EF-2 subfamily.

It is found in the cytoplasm. Catalyzes the GTP-dependent ribosomal translocation step during translation elongation. During this step, the ribosome changes from the pre-translocational (PRE) to the post-translocational (POST) state as the newly formed A-site-bound peptidyl-tRNA and P-site-bound deacylated tRNA move to the P and E sites, respectively. Catalyzes the coordinated movement of the two tRNA molecules, the mRNA and conformational changes in the ribosome. The protein is Elongation factor G 2 (fusB) of Pseudomonas putida (strain ATCC 47054 / DSM 6125 / CFBP 8728 / NCIMB 11950 / KT2440).